Consider the following 323-residue polypeptide: MVSEEYKKAGVDLEKLRNYHNMISQIISSTYKNTIIGAGHYSGVIKIGSLNIAMHTDGVGTKTFLALQTRIIKPVGIDCVAMNVNDLICVGAKPVALVDYIALERPMDNVVNEIIDGIVQGAKEADVEVIGGETAIMPDVIRGFDLSCTAIGVVDKLKTGAEIRPGDYVLGLESSGIHANGYSLVRKLIEEGKLSLDEYKNELLKPTKIYVKPILEVMNMIKGAAHVTGGAFSKLKRLTSYKIVLNMPDPPQIFKTIEKAGVAHEEMYKVFNMGIGIVLFVSEELMKEVKTKLEGYGTVYELGRVYNGNGITIKTYKNEILRL.

The protein belongs to the AIR synthase family.

It localises to the cytoplasm. The catalysed reaction is 2-formamido-N(1)-(5-O-phospho-beta-D-ribosyl)acetamidine + ATP = 5-amino-1-(5-phospho-beta-D-ribosyl)imidazole + ADP + phosphate + H(+). It functions in the pathway purine metabolism; IMP biosynthesis via de novo pathway; 5-amino-1-(5-phospho-D-ribosyl)imidazole from N(2)-formyl-N(1)-(5-phospho-D-ribosyl)glycinamide: step 2/2. In Saccharolobus solfataricus (strain ATCC 35092 / DSM 1617 / JCM 11322 / P2) (Sulfolobus solfataricus), this protein is Phosphoribosylformylglycinamidine cyclo-ligase.